Here is a 512-residue protein sequence, read N- to C-terminus: 2-isopropylmalate synthase (512 aa).

Positions 4–266 (IQFFDTTLRD…ETNIVLNQFK (263 aa)) constitute a Pyruvate carboxyltransferase domain. 4 residues coordinate Mn(2+): aspartate 13, histidine 201, histidine 203, and asparagine 237. The regulatory domain stretch occupies residues 390–512 (ELKHLQVQYV…SKQADFEEVK (123 aa)).

It belongs to the alpha-IPM synthase/homocitrate synthase family. LeuA type 1 subfamily. As to quaternary structure, homodimer. It depends on Mn(2+) as a cofactor.

The protein resides in the cytoplasm. It catalyses the reaction 3-methyl-2-oxobutanoate + acetyl-CoA + H2O = (2S)-2-isopropylmalate + CoA + H(+). The protein operates within amino-acid biosynthesis; L-leucine biosynthesis; L-leucine from 3-methyl-2-oxobutanoate: step 1/4. Functionally, catalyzes the condensation of the acetyl group of acetyl-CoA with 3-methyl-2-oxobutanoate (2-ketoisovalerate) to form 3-carboxy-3-hydroxy-4-methylpentanoate (2-isopropylmalate). This Listeria monocytogenes serotype 4a (strain HCC23) protein is 2-isopropylmalate synthase.